The following is a 77-amino-acid chain: Defensin-like protein 91 (77 aa).

An N-terminal signal peptide occupies residues Met-1–Ala-27. Intrachain disulfides connect Cys-38–Cys-75, Cys-43–Cys-64, Cys-49–Cys-73, and Cys-53–Cys-74.

This sequence belongs to the DEFL family.

The protein resides in the secreted. The sequence is that of Defensin-like protein 91 (LCR47) from Arabidopsis thaliana (Mouse-ear cress).